The primary structure comprises 396 residues: 1-deoxy-D-xylulose 5-phosphate reductoisomerase (396 aa).

Thr10, Gly11, Ser12, Ile13, and Asn123 together coordinate NADPH. Lys124 lines the 1-deoxy-D-xylulose 5-phosphate pocket. Glu125 is a binding site for NADPH. Residue Asp149 coordinates Mn(2+). Residues Ser150, Glu151, Ser185, and His208 each coordinate 1-deoxy-D-xylulose 5-phosphate. Glu151 contacts Mn(2+). NADPH is bound at residue Gly214. 4 residues coordinate 1-deoxy-D-xylulose 5-phosphate: Ser221, Asn226, Lys227, and Glu230. Residue Glu230 coordinates Mn(2+).

The protein belongs to the DXR family. Requires Mg(2+) as cofactor. Mn(2+) serves as cofactor.

The enzyme catalyses 2-C-methyl-D-erythritol 4-phosphate + NADP(+) = 1-deoxy-D-xylulose 5-phosphate + NADPH + H(+). The protein operates within isoprenoid biosynthesis; isopentenyl diphosphate biosynthesis via DXP pathway; isopentenyl diphosphate from 1-deoxy-D-xylulose 5-phosphate: step 1/6. Functionally, catalyzes the NADPH-dependent rearrangement and reduction of 1-deoxy-D-xylulose-5-phosphate (DXP) to 2-C-methyl-D-erythritol 4-phosphate (MEP). The polypeptide is 1-deoxy-D-xylulose 5-phosphate reductoisomerase (Shewanella sp. (strain ANA-3)).